Consider the following 154-residue polypeptide: MALNGFGRRVSASVLLIALSLLSGALILPPAAAQRDENYPPPGILKMAKPFHDACVEKTGVTEAAIKEFSDGEIHEDEKLKCYMNCFFHEIEVVDDNGDVHLEKLFATVPLSMRDKLMEMSKGCVHPEGDTLCHKAWWFHQCWKKADPKHYFLP.

The first 33 residues, 1–33, serve as a signal peptide directing secretion; it reads MALNGFGRRVSASVLLIALSLLSGALILPPAAA. 3 disulfide bridges follow: Cys-55-Cys-86, Cys-82-Cys-133, and Cys-124-Cys-142.

Belongs to the PBP/GOBP family. In the ventrolateral region of the antenna, expressed in two distinct types of olfactory hairs: in most sensilla trichodea and in a subset of the small sensilla basiconica (at protein level).

Its subcellular location is the secreted. This is General odorant-binding protein 83a (Obp83a) from Drosophila melanogaster (Fruit fly).